Reading from the N-terminus, the 504-residue chain is UDP-N-acetylmuramoylalanine--D-glutamate ligase (504 aa).

129-135 serves as a coordination point for ATP; that stretch reads GTNGKTT.

This sequence belongs to the MurCDEF family.

It localises to the cytoplasm. The catalysed reaction is UDP-N-acetyl-alpha-D-muramoyl-L-alanine + D-glutamate + ATP = UDP-N-acetyl-alpha-D-muramoyl-L-alanyl-D-glutamate + ADP + phosphate + H(+). The protein operates within cell wall biogenesis; peptidoglycan biosynthesis. Functionally, cell wall formation. Catalyzes the addition of glutamate to the nucleotide precursor UDP-N-acetylmuramoyl-L-alanine (UMA). This Cupriavidus metallidurans (strain ATCC 43123 / DSM 2839 / NBRC 102507 / CH34) (Ralstonia metallidurans) protein is UDP-N-acetylmuramoylalanine--D-glutamate ligase.